We begin with the raw amino-acid sequence, 345 residues long: uncharacterized protein (345 aa).

One can recognise a CNNM transmembrane domain in the interval methionine 1 to glutamate 198. 2 helical membrane passes run valine 3–alanine 23 and valine 95–leucine 115. CBS domains follow at residues alanine 217–valine 280 and valine 285–glycine 342. A helical membrane pass occupies residues leucine 312–valine 332.

This sequence belongs to the TerC family.

It localises to the cell membrane. This is an uncharacterized protein from Mycobacterium tuberculosis (strain ATCC 25618 / H37Rv).